The sequence spans 87 residues: Small ribosomal subunit protein uS17 (87 aa).

The protein belongs to the universal ribosomal protein uS17 family. In terms of assembly, part of the 30S ribosomal subunit.

In terms of biological role, one of the primary rRNA binding proteins, it binds specifically to the 5'-end of 16S ribosomal RNA. The polypeptide is Small ribosomal subunit protein uS17 (Alkalilimnicola ehrlichii (strain ATCC BAA-1101 / DSM 17681 / MLHE-1)).